Here is a 418-residue protein sequence, read N- to C-terminus: Thyroxine-binding globulin (418 aa).

The first 20 residues, 1–20, serve as a signal peptide directing secretion; sequence MSVFFYLFVLVFGLQATIHC. N-linked (GlcNAc...) asparagine glycosylation is found at N24, N39, N102, N168, N227, and N256. 2 residues coordinate thyroxine: N296 and K401.

This sequence belongs to the serpin family.

The protein resides in the secreted. Its function is as follows. Major thyroid hormone transport protein in serum. The polypeptide is Thyroxine-binding globulin (Serpina7) (Mus musculus (Mouse)).